Reading from the N-terminus, the 555-residue chain is Hydroxylamine reductase (555 aa).

Residues C5, C8, C17, and C23 each contribute to the [4Fe-4S] cluster site. Hybrid [4Fe-2O-2S] cluster-binding residues include H248, E272, C316, C408, C436, C461, E496, and K498. Cysteine persulfide is present on C408.

It belongs to the HCP family. [4Fe-4S] cluster is required as a cofactor. It depends on hybrid [4Fe-2O-2S] cluster as a cofactor.

The protein resides in the cytoplasm. The enzyme catalyses A + NH4(+) + H2O = hydroxylamine + AH2 + H(+). Its function is as follows. Catalyzes the reduction of hydroxylamine to form NH(3) and H(2)O. The protein is Hydroxylamine reductase of Natranaerobius thermophilus (strain ATCC BAA-1301 / DSM 18059 / JW/NM-WN-LF).